A 422-amino-acid chain; its full sequence is MLFTRSVARISSKFLRNRSFYGSSQSLASHRFAIIPDQGHSCSDSPHKGYVCRTTYSLKSPVFGGFSHQLYHQSSSLVEEELDPFSLVADELSLLSNKLREMVLAEVPKLASAAEYFFKRGVQGKQFRSTILLLMATALNVRVPEALIGESTDIVTSELRVRQRGIAEITEMIHVASLLHDDVLDDADTRRGVGSLNVVMGNKMSVLAGDFLLSRACGALAALKNTEVVALLATAVEHLVTGETMEITSSTEQRYSMDYYMQKTYYKTASLISNSCKAVAVLTGQTAEVAVLAFEYGRNLGLAFQLIDDILDFTGTSASLGKGSLSDIRHGVITAPILFAMEEFPQLREVVDQVEKDPRNVDIALEYLGKSKGIQRARELAMEHANLAAAAIGSLPETDNEDVKRSRRALIDLTHRVITRNK.

Residues 1–32 (MLFTRSVARISSKFLRNRSFYGSSQSLASHRF) constitute a chloroplast and mitochondrion transit peptide. Isopentenyl diphosphate is bound by residues K125, R128, and H174. 2 residues coordinate Mg(2+): D181 and D185. R190 is an an all-trans-polyprenyl diphosphate binding site. Position 191 (R191) interacts with isopentenyl diphosphate. Residues K267, T268, Q305, and K322 each contribute to the an all-trans-polyprenyl diphosphate site.

This sequence belongs to the FPP/GGPP synthase family. In terms of assembly, homodimer. Requires Mg(2+) as cofactor. Ubiquitous. Highest expression in seeds and shoot apical meristem.

It localises to the plastid. It is found in the chloroplast. The protein localises to the mitochondrion. The catalysed reaction is 5 isopentenyl diphosphate + (2E,6E,10E)-geranylgeranyl diphosphate = all-trans-nonaprenyl diphosphate + 5 diphosphate. May be involved in the supply of solanesyl diphosphate for ubiquinone-9 (UQ-9) biosynthesis in mitochondria. Synthesizes C25 to C45 medium / long-chain products depending on the type of substrate available. Can use geranyl diphosphate, farnesyl diphosphate or geranylgeranyl diphosphate as substrates, but not dimethylallyl diphosphate. The chain is Solanesyl diphosphate synthase 3, chloroplastic/mitochondrial from Arabidopsis thaliana (Mouse-ear cress).